The chain runs to 382 residues: Succinate--CoA ligase [ADP-forming] subunit beta (382 aa).

Residues 9–240 (KELLKKYGLP…ITQIDPLEVE (232 aa)) enclose the ATP-grasp domain. 4 residues coordinate ATP: Lys46, Glu98, Thr101, and Glu106. Residues Asn195 and Asp209 each contribute to the Mg(2+) site. Substrate-binding positions include Asn260 and 317–319 (GIL).

It belongs to the succinate/malate CoA ligase beta subunit family. Heterotetramer of two alpha and two beta subunits. Mg(2+) is required as a cofactor.

It carries out the reaction succinate + ATP + CoA = succinyl-CoA + ADP + phosphate. It catalyses the reaction GTP + succinate + CoA = succinyl-CoA + GDP + phosphate. It functions in the pathway carbohydrate metabolism; tricarboxylic acid cycle; succinate from succinyl-CoA (ligase route): step 1/1. Succinyl-CoA synthetase functions in the citric acid cycle (TCA), coupling the hydrolysis of succinyl-CoA to the synthesis of either ATP or GTP and thus represents the only step of substrate-level phosphorylation in the TCA. The beta subunit provides nucleotide specificity of the enzyme and binds the substrate succinate, while the binding sites for coenzyme A and phosphate are found in the alpha subunit. The chain is Succinate--CoA ligase [ADP-forming] subunit beta from Hydrogenobaculum sp. (strain Y04AAS1).